The primary structure comprises 363 residues: Ribosomal RNA large subunit methyltransferase M (363 aa).

S-adenosyl-L-methionine is bound by residues Ser194, Cys227–Gly230, Asp246, Asp266, and Asp284. The active-site Proton acceptor is Lys313.

The protein belongs to the class I-like SAM-binding methyltransferase superfamily. RNA methyltransferase RlmE family. RlmM subfamily. In terms of assembly, monomer.

Its subcellular location is the cytoplasm. The enzyme catalyses cytidine(2498) in 23S rRNA + S-adenosyl-L-methionine = 2'-O-methylcytidine(2498) in 23S rRNA + S-adenosyl-L-homocysteine + H(+). Catalyzes the 2'-O-methylation at nucleotide C2498 in 23S rRNA. The protein is Ribosomal RNA large subunit methyltransferase M of Mannheimia succiniciproducens (strain KCTC 0769BP / MBEL55E).